A 308-amino-acid chain; its full sequence is D-2-hydroxyacid dehydrogenase (308 aa).

NAD(+) is bound by residues 145 to 146 (TL), 224 to 226 (VAR), and D250. The active site involves R226. E255 is an active-site residue. The Proton donor role is filled by H274. 274–277 (HVSA) contacts NAD(+).

It belongs to the D-isomer specific 2-hydroxyacid dehydrogenase family. In terms of assembly, homotetramer.

Functionally, catalyzes the stereospecific NAD(P)H-dependent reduction of 2-ketocarboxylic acids into the corresponding D-2-hydroxycarboxylic acids. Can use both NADPH or NADH as reductant, displaying a marked preference for NADPH over NADH. Shows a broad substrate specificity, although it displays a marked preference for the 2-ketocarboxylic acids having an unbranched chain of 4-5 carbon atoms. The chain is D-2-hydroxyacid dehydrogenase (ddh) from Haloferax mediterranei (strain ATCC 33500 / DSM 1411 / JCM 8866 / NBRC 14739 / NCIMB 2177 / R-4) (Halobacterium mediterranei).